The following is a 191-amino-acid chain: Adenylate kinase (191 aa).

An ATP-binding site is contributed by 11–16 (GSGKGT). Residues 31–60 (STGEILRREIKDKTELGKIAEEYINQGQLL) form an NMP region. Residues T32, R37, 58-60 (QLL), 86-89 (GFPR), and Q93 each bind AMP. The interval 127–137 (KRGKLFSRKDD) is LID. R128 contacts ATP. AMP-binding residues include R134 and R145. N173 provides a ligand contact to ATP.

Belongs to the adenylate kinase family. As to quaternary structure, monomer.

It is found in the cytoplasm. It catalyses the reaction AMP + ATP = 2 ADP. The protein operates within purine metabolism; AMP biosynthesis via salvage pathway; AMP from ADP: step 1/1. Catalyzes the reversible transfer of the terminal phosphate group between ATP and AMP. Plays an important role in cellular energy homeostasis and in adenine nucleotide metabolism. The protein is Adenylate kinase of Azobacteroides pseudotrichonymphae genomovar. CFP2.